The chain runs to 297 residues: HTH-type transcriptional regulator ArgP (297 aa).

The HTH lysR-type domain occupies 4-60 (PDYRTLQALDAVIRERGFERAAQKLCITQSAVSQRIKQLENMFGQPLLVRTVPPRPT). Residues 21-40 (FERAAQKLCITQSAVSQRIK) constitute a DNA-binding region (H-T-H motif).

The protein belongs to the LysR transcriptional regulatory family. Homodimer.

Functionally, controls the transcription of genes involved in arginine and lysine metabolism. The protein is HTH-type transcriptional regulator ArgP of Salmonella dublin (strain CT_02021853).